The primary structure comprises 122 residues: Large ribosomal subunit protein uL14 (122 aa).

Belongs to the universal ribosomal protein uL14 family. As to quaternary structure, part of the 50S ribosomal subunit. Forms a cluster with proteins L3 and L19. In the 70S ribosome, L14 and L19 interact and together make contacts with the 16S rRNA in bridges B5 and B8.

In terms of biological role, binds to 23S rRNA. Forms part of two intersubunit bridges in the 70S ribosome. The chain is Large ribosomal subunit protein uL14 from Nitrosospira multiformis (strain ATCC 25196 / NCIMB 11849 / C 71).